The primary structure comprises 375 residues: Flagellar P-ring protein (375 aa).

An N-terminal signal peptide occupies residues 1–23 (MFNQSFLKYMLFGFFLFSFHAHA).

The protein belongs to the FlgI family. The basal body constitutes a major portion of the flagellar organelle and consists of four rings (L,P,S, and M) mounted on a central rod.

It is found in the bacterial flagellum basal body. Functionally, assembles around the rod to form the L-ring and probably protects the motor/basal body from shearing forces during rotation. The chain is Flagellar P-ring protein from Buchnera aphidicola subsp. Baizongia pistaciae (strain Bp).